The following is a 482-amino-acid chain: Ribulose bisphosphate carboxylase large chain (482 aa).

Positions 1-2 (MS) are excised as a propeptide. Position 3 is an N-acetylproline (Pro-3). Position 14 is an N6,N6,N6-trimethyllysine (Lys-14). Residues Asn-123 and Thr-173 each contribute to the substrate site. The active-site Proton acceptor is the Lys-175. Lys-177 is a binding site for substrate. The Mg(2+) site is built by Lys-201, Asp-203, and Glu-204. N6-carboxylysine is present on Lys-201. His-294 functions as the Proton acceptor in the catalytic mechanism. Substrate contacts are provided by Arg-295, His-327, and Ser-379.

The protein belongs to the RuBisCO large chain family. Type I subfamily. Heterohexadecamer of 8 large chains and 8 small chains; disulfide-linked. The disulfide link is formed within the large subunit homodimers. Mg(2+) serves as cofactor. In terms of processing, the disulfide bond which can form in the large chain dimeric partners within the hexadecamer appears to be associated with oxidative stress and protein turnover.

The protein localises to the plastid. It is found in the chloroplast. It carries out the reaction 2 (2R)-3-phosphoglycerate + 2 H(+) = D-ribulose 1,5-bisphosphate + CO2 + H2O. It catalyses the reaction D-ribulose 1,5-bisphosphate + O2 = 2-phosphoglycolate + (2R)-3-phosphoglycerate + 2 H(+). Its function is as follows. RuBisCO catalyzes two reactions: the carboxylation of D-ribulose 1,5-bisphosphate, the primary event in carbon dioxide fixation, as well as the oxidative fragmentation of the pentose substrate in the photorespiration process. Both reactions occur simultaneously and in competition at the same active site. In Stegnosperma halimifolium, this protein is Ribulose bisphosphate carboxylase large chain.